We begin with the raw amino-acid sequence, 310 residues long: Homoserine kinase (310 aa).

91-101 (PIGSGLGSSAC) serves as a coordination point for ATP.

The protein belongs to the GHMP kinase family. Homoserine kinase subfamily.

The protein localises to the cytoplasm. It carries out the reaction L-homoserine + ATP = O-phospho-L-homoserine + ADP + H(+). Its pathway is amino-acid biosynthesis; L-threonine biosynthesis; L-threonine from L-aspartate: step 4/5. Functionally, catalyzes the ATP-dependent phosphorylation of L-homoserine to L-homoserine phosphate. The protein is Homoserine kinase of Escherichia coli (strain K12 / MC4100 / BW2952).